A 435-amino-acid chain; its full sequence is Serine--tRNA ligase (435 aa).

L-serine is bound at residue 242–244; the sequence is TAE. 273–275 serves as a coordination point for ATP; it reads RSE. L-serine is bound at residue Glu-296. 360–363 is an ATP binding site; it reads EISS. Ser-396 lines the L-serine pocket.

This sequence belongs to the class-II aminoacyl-tRNA synthetase family. Type-1 seryl-tRNA synthetase subfamily. Homodimer. The tRNA molecule binds across the dimer.

Its subcellular location is the cytoplasm. It carries out the reaction tRNA(Ser) + L-serine + ATP = L-seryl-tRNA(Ser) + AMP + diphosphate + H(+). The enzyme catalyses tRNA(Sec) + L-serine + ATP = L-seryl-tRNA(Sec) + AMP + diphosphate + H(+). It participates in aminoacyl-tRNA biosynthesis; selenocysteinyl-tRNA(Sec) biosynthesis; L-seryl-tRNA(Sec) from L-serine and tRNA(Sec): step 1/1. Functionally, catalyzes the attachment of serine to tRNA(Ser). Is also able to aminoacylate tRNA(Sec) with serine, to form the misacylated tRNA L-seryl-tRNA(Sec), which will be further converted into selenocysteinyl-tRNA(Sec). The chain is Serine--tRNA ligase from Vibrio vulnificus (strain YJ016).